A 352-amino-acid polypeptide reads, in one-letter code: tRNA N6-adenosine threonylcarbamoyltransferase (352 aa).

The Fe cation site is built by H115 and H119. Substrate contacts are provided by residues 137–141 (LVSGG), D170, G183, and N281. D309 lines the Fe cation pocket.

The protein belongs to the KAE1 / TsaD family. It depends on Fe(2+) as a cofactor.

The protein resides in the cytoplasm. The catalysed reaction is L-threonylcarbamoyladenylate + adenosine(37) in tRNA = N(6)-L-threonylcarbamoyladenosine(37) in tRNA + AMP + H(+). Required for the formation of a threonylcarbamoyl group on adenosine at position 37 (t(6)A37) in tRNAs that read codons beginning with adenine. Is involved in the transfer of the threonylcarbamoyl moiety of threonylcarbamoyl-AMP (TC-AMP) to the N6 group of A37, together with TsaE and TsaB. TsaD likely plays a direct catalytic role in this reaction. This Methylocapsa acidiphila protein is tRNA N6-adenosine threonylcarbamoyltransferase.